The following is a 61-amino-acid chain: Metallothionein-2 (61 aa).

Met-1 bears the N-acetylmethionine mark. Residues Met-1–Cys-29 are beta. A divalent metal cation is bound by residues Cys-5, Cys-7, Cys-13, Cys-15, Cys-19, Cys-21, Cys-24, Cys-26, Cys-29, Cys-33, Cys-34, Cys-36, Cys-37, Cys-41, Cys-44, Cys-48, Cys-50, Cys-57, Cys-59, and Cys-60. The tract at residues Lys-20 to Lys-25 is antigenic epitope. The alpha stretch occupies residues Lys-30–Ala-61.

The protein belongs to the metallothionein superfamily. Type 1 family.

Metallothioneins have a high content of cysteine residues that bind various heavy metals; these proteins are transcriptionally regulated by both heavy metals and glucocorticoids. The chain is Metallothionein-2 (MT2) from Macaca fascicularis (Crab-eating macaque).